Reading from the N-terminus, the 119-residue chain is Large ribosomal subunit protein bL20c (119 aa).

It belongs to the bacterial ribosomal protein bL20 family.

It is found in the plastid. Its subcellular location is the chloroplast. Binds directly to 23S ribosomal RNA and is necessary for the in vitro assembly process of the 50S ribosomal subunit. It is not involved in the protein synthesizing functions of that subunit. This is Large ribosomal subunit protein bL20c (rpl20) from Pinus thunbergii (Japanese black pine).